The sequence spans 154 residues: MAARVCCQLDPARDVLCLRPVGAESRGRPVSGPFGPLPSPSSSAVPADHGARLSLRGLPVCAFSSAGPCALRFTSARRMETTVNAHQVLPKVLHKRTLGLSAMSTTDLEAYFKDCLFKDWEELGEEIRLMVFVLGGCRHKLVCSPAPCNFFTSA.

The interval 68 to 117 is mitochondrial targeting sequence; the sequence is PCALRFTSARRMETTVNAHQVLPKVLHKRTLGLSAMSTTDLEAYFKDCLF.

This sequence belongs to the orthohepadnavirus protein X family. May form homodimer. May interact with host CEBPA, CFLAR, CREB1, DDB1, E4F1, HBXIP, HSPD1/HSP60, NFKBIA, POLR2E and SMAD4. Interacts with host SMC5-SMC6 complex and induces its degradation. Interacts with host TRPC4AP; leading to prevent ubiquitination of TRPC4AP. Interacts with host PLSCR1; this interaction promotes ubiquitination and degradation of HBx and impairs HBx-mediated cell proliferation. Post-translationally, a fraction may be phosphorylated in insect cells and HepG2 cells, a human hepatoblastoma cell line. Phosphorylated in vitro by host protein kinase C or mitogen-activated protein kinase. N-acetylated in insect cells.

It is found in the host cytoplasm. Its subcellular location is the host nucleus. The protein localises to the host mitochondrion. In terms of biological role, multifunctional protein that plays a role in silencing host antiviral defenses and promoting viral transcription. Does not seem to be essential for HBV infection. May be directly involved in development of cirrhosis and liver cancer (hepatocellular carcinoma). Most of cytosolic activities involve modulation of cytosolic calcium. The effect on apoptosis is controversial depending on the cell types in which the studies have been conducted. May induce apoptosis by localizing in mitochondria and causing loss of mitochondrial membrane potential. May also modulate apoptosis by binding host CFLAR, a key regulator of the death-inducing signaling complex (DISC). Promotes viral transcription by using the host E3 ubiquitin ligase DDB1 to target the SMC5-SMC6 complex to proteasomal degradation. This host complex would otherwise bind to viral episomal DNA, and prevents its transcription. Moderately stimulates transcription of many different viral and cellular transcription elements. Promoters and enhancers stimulated by HBx contain DNA binding sites for NF-kappa-B, AP-1, AP-2, c-EBP, ATF/CREB, or the calcium-activated factor NF-AT. This Hepatitis B virus genotype C subtype adr (isolate Japan/Nishioka/1983) (HBV-C) protein is Protein X.